Here is a 1389-residue protein sequence, read N- to C-terminus: Superkiller protein 3 (1389 aa).

3 TPR repeats span residues 2–35 (AKPA…DANN), 36–69 (YNAN…DEKA), and 90–123 (HKIT…VKKY). The tract at residues 326 to 355 (SNNSAELAKETKEEDDSENSVDKKENEEDI) is disordered. TPR repeat units follow at residues 381-414 (TIIS…LKRL), 429-463 (FQLC…DPRN), 465-497 (HALL…HEND), 498-530 (PSLS…LLSM), 538-574 (AEAY…DPNY), 575-608 (APAY…DASQ), 650-683 (NWHH…SPKD), 684-717 (TNAW…DPDD), 719-751 (YVKY…RSKE), 759-792 (AETY…CCNV), 931-963 (VFWN…NERS), 964-997 (SGVW…DPDN), 999-1031 (QAWL…SSGK), 1124-1157 (IDAK…LEGE), and 1167-1200 (LGLN…SDSN).

As to quaternary structure, component of the SKI complex composed of at least ski2, ski3 and ski8. The SKI complex interacts with ski7, which makes the link between the SKI complex and the exosome in order to perform mRNA degradation.

It is found in the cytoplasm. Functionally, component of the SKI complex involved in 3'-mRNA degradation pathway. The protein is Superkiller protein 3 (ski3) of Schizosaccharomyces pombe (strain 972 / ATCC 24843) (Fission yeast).